A 290-amino-acid chain; its full sequence is Large ribosomal subunit protein uL3 (290 aa).

At Gln152 the chain carries N5-methylglutamine. The disordered stretch occupies residues 250-290; that stretch reads ARLAEEQAAAEAESLAQAEAEIAAEGSDAAPEGDADKKDGE. Residues 255–274 are compositionally biased toward low complexity; the sequence is EQAAAEAESLAQAEAEIAAE.

This sequence belongs to the universal ribosomal protein uL3 family. Part of the 50S ribosomal subunit. Forms a cluster with proteins L14 and L19. Post-translationally, methylated by PrmB.

In terms of biological role, one of the primary rRNA binding proteins, it binds directly near the 3'-end of the 23S rRNA, where it nucleates assembly of the 50S subunit. The polypeptide is Large ribosomal subunit protein uL3 (Jannaschia sp. (strain CCS1)).